Here is a 206-residue protein sequence, read N- to C-terminus: Flavin prenyltransferase UbiX (206 aa).

Residues 14–16, Thr-40, 101–104, and Arg-136 contribute to the FMN site; these read GAS and SMGT. Dimethylallyl phosphate contacts are provided by Tyr-166 and Lys-182.

It belongs to the UbiX/PAD1 family.

The catalysed reaction is dimethylallyl phosphate + FMNH2 = prenylated FMNH2 + phosphate. In terms of biological role, flavin prenyltransferase that catalyzes the synthesis of the prenylated FMN cofactor (prenyl-FMN) for 4-hydroxy-3-polyprenylbenzoic acid decarboxylase UbiD. The prenyltransferase is metal-independent and links a dimethylallyl moiety from dimethylallyl monophosphate (DMAP) to the flavin N5 and C6 atoms of FMN. This chain is Flavin prenyltransferase UbiX, found in Halalkalibacterium halodurans (strain ATCC BAA-125 / DSM 18197 / FERM 7344 / JCM 9153 / C-125) (Bacillus halodurans).